The primary structure comprises 560 residues: Trans-activating transcriptional regulatory protein (560 aa).

2 disordered regions span residues 1-25 (MPKNMETLQRSYMGPSTPNHNLFNN) and 99-134 (TGAETGAAGGSKRKASEVDSDSDSDDSSKGKKLVNK).

This sequence belongs to the nucleopolyhedrovirus IE-1 protein family.

In terms of biological role, regulatory transcriptional protein, which trans-activates gene expression from early baculovirus promoters. Can also trans-activate its own promoter, suggesting that it is autoregulated during normal infection of insect cells. In Orgyia pseudotsugata (Douglas-fir tussock moth), this protein is Trans-activating transcriptional regulatory protein (IE1).